The sequence spans 284 residues: Bifunctional protein FolD (284 aa).

Residues 166–168 and serine 191 each bind NADP(+); that span reads GRS.

Belongs to the tetrahydrofolate dehydrogenase/cyclohydrolase family. As to quaternary structure, homodimer.

It carries out the reaction (6R)-5,10-methylene-5,6,7,8-tetrahydrofolate + NADP(+) = (6R)-5,10-methenyltetrahydrofolate + NADPH. The catalysed reaction is (6R)-5,10-methenyltetrahydrofolate + H2O = (6R)-10-formyltetrahydrofolate + H(+). It functions in the pathway one-carbon metabolism; tetrahydrofolate interconversion. Catalyzes the oxidation of 5,10-methylenetetrahydrofolate to 5,10-methenyltetrahydrofolate and then the hydrolysis of 5,10-methenyltetrahydrofolate to 10-formyltetrahydrofolate. The polypeptide is Bifunctional protein FolD (Delftia acidovorans (strain DSM 14801 / SPH-1)).